The chain runs to 409 residues: Microfibrillar-associated protein 3-like (409 aa).

An N-terminal signal peptide occupies residues 1 to 28; sequence MGLQKSHLTVCLPPSVPFLILVSTLATA. Over 29 to 148 the chain is Extracellular; it reads KSVTNSTLNG…TLRVIFTSGD (120 aa). Residues Asn-33, Asn-37, Asn-67, Asn-111, and Asn-135 are each glycosylated (N-linked (GlcNAc...) asparagine). Positions 47–141 constitute an Ig-like C2-type domain; the sequence is PVIIARTDHI…GTINNTVTLR (95 aa). Cys-68 and Cys-125 form a disulfide bridge. A helical transmembrane segment spans residues 149–169; the sequence is MGVYYMVVCLVAFTIVMILNI. Topologically, residues 170-409 are cytoplasmic; that stretch reads TRLCMMSSHL…NTCIIYESHV (240 aa). Tyr-287 carries the post-translational modification Phosphotyrosine. Residues Ser-298, Ser-303, Ser-306, and Ser-307 each carry the phosphoserine modification. Residues 319–395 form a disordered region; sequence VSVHPQSKRD…AHLETTEPAV (77 aa). The span at 325-340 shows a compositional bias: basic and acidic residues; that stretch reads SKRDHVDDQEGGHFEV. Residues 356 to 373 are compositionally biased toward low complexity; it reads TAEPSTDITTTELTSEET.

Its subcellular location is the cell membrane. It localises to the nucleus. The protein resides in the cytoplasm. In terms of biological role, may participate in the nuclear signaling of EGFR and MAPK1/ERK2. In Mus musculus (Mouse), this protein is Microfibrillar-associated protein 3-like (Mfap3l).